The sequence spans 111 residues: Nucleoid-associated protein VF_1686 (111 aa).

Disordered stretches follow at residues methionine 1 to glutamine 23 and threonine 89 to phenylalanine 111.

It belongs to the YbaB/EbfC family. As to quaternary structure, homodimer.

It is found in the cytoplasm. It localises to the nucleoid. Binds to DNA and alters its conformation. May be involved in regulation of gene expression, nucleoid organization and DNA protection. This Aliivibrio fischeri (strain ATCC 700601 / ES114) (Vibrio fischeri) protein is Nucleoid-associated protein VF_1686.